An 80-amino-acid polypeptide reads, in one-letter code: Exodeoxyribonuclease 7 small subunit (80 aa).

The protein belongs to the XseB family. In terms of assembly, heterooligomer composed of large and small subunits.

Its subcellular location is the cytoplasm. It catalyses the reaction Exonucleolytic cleavage in either 5'- to 3'- or 3'- to 5'-direction to yield nucleoside 5'-phosphates.. Its function is as follows. Bidirectionally degrades single-stranded DNA into large acid-insoluble oligonucleotides, which are then degraded further into small acid-soluble oligonucleotides. This Citrobacter koseri (strain ATCC BAA-895 / CDC 4225-83 / SGSC4696) protein is Exodeoxyribonuclease 7 small subunit.